The sequence spans 20 residues: Hemocyanin subunit Ia (20 aa).

Residues 1 to 20 form a disordered region; sequence ADXQPGDSTDKLLAQKQDDV.

This sequence belongs to the tyrosinase family. Hemocyanin subfamily. Composed of 3 major subunits (IB, II and III) and 1 minor subunit (IA) which form homohexamers and heterohexamers. May also form larger structures. In terms of tissue distribution, hemolymph.

It is found in the secreted. It localises to the extracellular space. Its function is as follows. Hemocyanins are copper-containing oxygen carriers occurring freely dissolved in the hemolymph of many mollusks and arthropods. This Panulirus japonicus (Japanese spiny lobster) protein is Hemocyanin subunit Ia.